Here is a 105-residue protein sequence, read N- to C-terminus: Cell division protein FtsB (105 aa).

The Cytoplasmic portion of the chain corresponds to 1–3 (MKP). A helical membrane pass occupies residues 4-21 (FVLVLFALLALLQYRLWF). Topologically, residues 22–105 (GENSLTEYFT…RSSEQSQDNQ (84 aa)) are periplasmic. Positions 38 to 75 (HQQSGNAELLERNEVLKEEIQDLKSGTEALEERARNEL) form a coiled coil.

Belongs to the FtsB family. In terms of assembly, part of a complex composed of FtsB, FtsL and FtsQ.

The protein localises to the cell inner membrane. Functionally, essential cell division protein. May link together the upstream cell division proteins, which are predominantly cytoplasmic, with the downstream cell division proteins, which are predominantly periplasmic. The chain is Cell division protein FtsB from Shewanella amazonensis (strain ATCC BAA-1098 / SB2B).